Here is a 287-residue protein sequence, read N- to C-terminus: Glucose uptake protein GlcU (287 aa).

The next 8 membrane-spanning stretches (helical) occupy residues 4 to 26 (LLAL…LGGG), 38 to 60 (ALIV…IFIV), 110 to 132 (WSTP…GIIL), 153 to 175 (ILIL…LFNV), 180 to 197 (ALLP…VLTY), 210 to 227 (ILPG…FISQ), 232 to 254 (VATS…IFIL), and 261 to 283 (RQLI…LGIA).

The protein belongs to the GRP transporter (TC 2.A.7.5) family.

It localises to the cell membrane. Involved in the uptake of glucose. The protein is Glucose uptake protein GlcU (glcU) of Bacillus subtilis (strain 168).